Consider the following 194-residue polypeptide: Ion-translocating oxidoreductase complex subunit A (194 aa).

The next 6 membrane-spanning stretches (helical) occupy residues 4 to 24 (LVLI…QFLG), 39 to 59 (IGLS…SYLV), 71 to 91 (FLRT…TEMV), 102 to 122 (VLGI…VALL), 131 to 151 (FITA…VLVL), and 172 to 192 (AIGM…AGLI).

It belongs to the NqrDE/RnfAE family. The complex is composed of six subunits: RnfA, RnfB, RnfC, RnfD, RnfE and RnfG.

It localises to the cell inner membrane. Its function is as follows. Part of a membrane-bound complex that couples electron transfer with translocation of ions across the membrane. In Ectopseudomonas mendocina (strain ymp) (Pseudomonas mendocina), this protein is Ion-translocating oxidoreductase complex subunit A.